The primary structure comprises 267 residues: Alpha carbonic anhydrase 4 (267 aa).

A signal peptide spans 1-26; it reads MDTNAKTIFFMAMCFIYLSFPNISHA. An N-linked (GlcNAc...) asparagine glycan is attached at N22. The 231-residue stretch at 34 to 264 folds into the Alpha-carbonic anhydrase domain; the sequence is TPFTYEQKTE…SKGRSVWFYD (231 aa). A disulfide bond links C59 and C214. H99 acts as the Proton acceptor in catalysis. Zn(2+)-binding residues include H125 and H127. A glycan (N-linked (GlcNAc...) asparagine) is linked at N135. H144 serves as a coordination point for Zn(2+). 210 to 211 provides a ligand contact to substrate; that stretch reads TV.

Belongs to the alpha-class carbonic anhydrase family. The cofactor is Zn(2+). In terms of processing, N-glycosylated.

Its subcellular location is the plastid. It is found in the chloroplast stroma. It catalyses the reaction hydrogencarbonate + H(+) = CO2 + H2O. In terms of biological role, reversible hydration of carbon dioxide. In Arabidopsis thaliana (Mouse-ear cress), this protein is Alpha carbonic anhydrase 4 (ACA4).